Here is a 221-residue protein sequence, read N- to C-terminus: MIDLRYSSGNIFSESVHEIGIIALGSFLENHGSALPIDTDAKIASYIALNVSIITGAKFLGIVLPSTEYSYVKHGIHDSIEDVINYIKYLVENGRKIGIKKFLIINCHGGNTIIEDELLKLNSKDCFITMNSVCLTHASTEEVSLGYAVGILSEDKMKDHDPKVYGEIGMVGLTEAREKNEAIDLEAKSVEENGVFLDKVNGKSLLNDLINNYVEIVKNMI.

Fe cation is bound by residues Glu-29, His-31, Asp-40, and His-108.

The protein belongs to the creatininase superfamily. FAPy deformylase family. Homodimer. Requires Fe(2+) as cofactor. It depends on Zn(2+) as a cofactor.

The catalysed reaction is 2-amino-5-formylamino-6-(5-phospho-D-ribosylamino)pyrimidin-4(3H)-one + H2O = 2,5-diamino-6-(1-D-ribosylamino)pyrimidin-4(3H)-one 5'-phosphate + formate + H(+). It participates in cofactor biosynthesis; coenzyme F420 biosynthesis. Its pathway is cofactor biosynthesis; riboflavin biosynthesis. Its function is as follows. Catalyzes the hydrolysis of the formamide of 2-amino-5-formylamino-6-ribosylamino-4(3H)-pyrimidinone 5'-monophosphate (FAPy) to form 2,5-diamino-6-ribosylamino-4(3H)-pyrimidinone 5'-phosphate (APy). This chain is 2-amino-5-formylamino-6-ribosylaminopyrimidin-4(3H)-one 5'-monophosphate deformylase, found in Methanococcus maripaludis (strain DSM 14266 / JCM 13030 / NBRC 101832 / S2 / LL).